A 452-amino-acid chain; its full sequence is Caspase-2 (452 aa).

Ala2 carries the post-translational modification N-acetylalanine. Residues 2-169 (AAPSAGSWST…TVEHSLDNKD (168 aa)) constitute a propeptide that is removed on maturation. The CARD domain maps to 32-121 (MHPHHQETLK…GHLEDMLLTT (90 aa)). A Phosphoserine modification is found at Ser157. Residues His277 and Cys320 contribute to the active site. Positions 326-333 (DRGVDQQD) are excised as a propeptide. A compositionally biased stretch (basic and acidic residues) spans 327–336 (RGVDQQDGKN). Residues 327–354 (RGVDQQDGKNHAGSPGCEESDAGKEKLP) form a disordered region. Position 340 is a phosphoserine (Ser340).

The protein belongs to the peptidase C14A family. As to quaternary structure, heterotetramer that consists of two anti-parallel arranged heterodimers, each one formed by a p18 subunit and a p12 subunit. Forms a complex named the PIDDosome with PIDD1 and CRADD. Interacts with NOL3 (via CARD domain); inhibits CASP2 activity in a phosphorylation-dependent manner. The mature protease can process its own propeptide, but not that of other caspases. Expressed at higher levels in the embryonic lung, liver and kidney than in the heart and brain. In adults, higher level expression is seen in the placenta, lung, kidney, and pancreas than in the heart, brain, liver and skeletal muscle.

The catalysed reaction is Strict requirement for an Asp residue at P1, with 316-Asp being essential for proteolytic activity and has a preferred cleavage sequence of Val-Asp-Val-Ala-Asp-|-.. In terms of biological role, is a regulator of the cascade of caspases responsible for apoptosis execution. Might function by either activating some proteins required for cell death or inactivating proteins necessary for cell survival. Associates with PIDD1 and CRADD to form the PIDDosome, a complex that activates CASP2 and triggers apoptosis in response to genotoxic stress. Acts as a positive regulator of apoptosis. Its function is as follows. Acts as a negative regulator of apoptosis. Functionally, may function as an endogenous apoptosis inhibitor that antagonizes caspase activation and cell death. The polypeptide is Caspase-2 (CASP2) (Homo sapiens (Human)).